We begin with the raw amino-acid sequence, 172 residues long: RNA pyrophosphohydrolase (172 aa).

A Nudix hydrolase domain is found at 6–149 (GYRLNVGIVI…KRDVYRRAMK (144 aa)). Residues 38-59 (GGIDEGETPEQAMYRELYEEVG) carry the Nudix box motif.

This sequence belongs to the Nudix hydrolase family. RppH subfamily. The cofactor is a divalent metal cation.

Functionally, accelerates the degradation of transcripts by removing pyrophosphate from the 5'-end of triphosphorylated RNA, leading to a more labile monophosphorylated state that can stimulate subsequent ribonuclease cleavage. In Vibrio atlanticus (strain LGP32) (Vibrio splendidus (strain Mel32)), this protein is RNA pyrophosphohydrolase.